Here is a 270-residue protein sequence, read N- to C-terminus: 3-methyl-2-oxobutanoate hydroxymethyltransferase (270 aa).

The Mg(2+) site is built by Asp50 and Asp89. 3-methyl-2-oxobutanoate-binding positions include 50-51 (DS), Asp89, and Lys118. Glu120 provides a ligand contact to Mg(2+). Glu187 functions as the Proton acceptor in the catalytic mechanism.

Belongs to the PanB family. Homodecamer; pentamer of dimers. The cofactor is Mg(2+).

It is found in the cytoplasm. The enzyme catalyses 3-methyl-2-oxobutanoate + (6R)-5,10-methylene-5,6,7,8-tetrahydrofolate + H2O = 2-dehydropantoate + (6S)-5,6,7,8-tetrahydrofolate. It participates in cofactor biosynthesis; (R)-pantothenate biosynthesis; (R)-pantoate from 3-methyl-2-oxobutanoate: step 1/2. Catalyzes the reversible reaction in which hydroxymethyl group from 5,10-methylenetetrahydrofolate is transferred onto alpha-ketoisovalerate to form ketopantoate. The protein is 3-methyl-2-oxobutanoate hydroxymethyltransferase of Helicobacter pylori (strain G27).